Reading from the N-terminus, the 391-residue chain is Polyketide synthase 3 (391 aa).

The active site involves Cys164.

This sequence belongs to the thiolase-like superfamily. Chalcone/stilbene synthases family. In terms of assembly, homodimer.

The catalysed reaction is (E)-4-coumaroyl-CoA + 3 malonyl-CoA + 3 H(+) = 2',4,4',6'-tetrahydroxychalcone + 3 CO2 + 4 CoA. The protein operates within secondary metabolite biosynthesis; flavonoid biosynthesis. In terms of biological role, polyketide synthase producing p-coumaryltriacetic acid lactone (CTAL) and slightly naringenin chalcone. Can use p-coumaryl-CoA as substrate. In Rubus idaeus (Raspberry), this protein is Polyketide synthase 3 (PKS3).